The following is a 324-amino-acid chain: MKTLEEVAKALKNTYMEHEVDEKLPLIQEIQRLKKEKNAILLGHNYMTPDVFHGVSDITGDSLYLSKVAADTDADVILFNGVHFMAETAKLMSPQKKVLIADLKAGCSLAESITRQDVIDLKQKYPGVPVVTYVNCTADVKAETDICCTSANALQVVESLESDTVIFLPDRYLAANVQNLTQKKIITHPGSCMVHEMYSAEDIELTRRQFPGVTVISHPECKTEVVDRSDYSGSTSQMSDFIRKSEAKNIFLITECSMGDNLRSEFPDRHFVSTCQVCPHMKKITLEKIRDSLLYDQYEIHLDPEVIEKGRMSVQRMLDLSFKK.

Iminosuccinate is bound by residues His-44 and Ser-62. Position 107 (Cys-107) interacts with [4Fe-4S] cluster. Residues Tyr-133–Asn-135 and Ser-150 contribute to the iminosuccinate site. Residue Cys-192 participates in [4Fe-4S] cluster binding. Iminosuccinate-binding positions include His-218–Glu-220 and Thr-235. Cys-278 serves as a coordination point for [4Fe-4S] cluster.

This sequence belongs to the quinolinate synthase family. Type 2 subfamily. The cofactor is [4Fe-4S] cluster.

It is found in the cytoplasm. The catalysed reaction is iminosuccinate + dihydroxyacetone phosphate = quinolinate + phosphate + 2 H2O + H(+). It participates in cofactor biosynthesis; NAD(+) biosynthesis; quinolinate from iminoaspartate: step 1/1. Catalyzes the condensation of iminoaspartate with dihydroxyacetone phosphate to form quinolinate. This chain is Quinolinate synthase, found in Leptospira interrogans serogroup Icterohaemorrhagiae serovar copenhageni (strain Fiocruz L1-130).